The following is a 478-amino-acid chain: MLCTTISGPSFLEAKKQILRSLKECHCFEMRVDLLSVSCLELKKLMELAPISILAWKKPESCSQADWIDKMQSLAELNPNYLDLEKDFPEEDMIRIRQLHPQIKIIRSLHTSEHTDIIQLYAHMRSSAADYYKFAVSSSSTTDLLDICHQKRSLPENTTVVCLGGMGRPSRILSPILQNPFTYARSTGSSPVAPGQFSLKHHYFYNFASLSAQSPICALIGDTSRSIGHLTHNPFFSQLGVACPYIKLPLTPQELPKFFSTIRTQPFLGVSVTSPLKTAVLPFLDKQAPSVKASGSCNTLVIRQGEIEGHDTDGEGLFSVLMQHQIPLNNQRVAIIGAGGAAQSIATRLSRANCELLIFNRTKAHAEDLASRCQAKAFSLEELPLHRVSLIINCLPPSCTIPKAVAPCVVDINTIPKHSTFTQYARSQGSSIIYGHEMFTQQALLQFRLWFPTLSFKHLEKTFIRRAAVLASLFSIAP.

The 3-dehydroquinate dehydratase stretch occupies residues 1–208; it reads MLCTTISGPS…LKHHYFYNFA (208 aa). Residues S21, 29-31, and 55-57 contribute to the 3-dehydroquinate site; these read EMR and AWK. The active-site Proton donor/acceptor; for 3-dehydroquinate dehydratase activity is H110. The active-site Schiff-base intermediate with substrate; for 3-dehydroquinate dehydratase activity is K133. 3-dehydroquinate-binding residues include R171 and Q196. Residues 209 to 478 are shikimate 5-dehydrogenase; that stretch reads SLSAQSPICA…VLASLFSIAP (270 aa). 226–228 serves as a coordination point for shikimate; that stretch reads SIG. K277 serves as the catalytic Proton acceptor; for shikimate dehydrogenase activity. Positions 298 and 313 each coordinate shikimate. Residues 337-341, 360-362, and G435 contribute to the NADP(+) site; these read GAGGA and NRT. A shikimate-binding site is contributed by Q442.

The protein in the N-terminal section; belongs to the type-I 3-dehydroquinase family. In the C-terminal section; belongs to the shikimate dehydrogenase family.

It carries out the reaction 3-dehydroquinate = 3-dehydroshikimate + H2O. The enzyme catalyses shikimate + NADP(+) = 3-dehydroshikimate + NADPH + H(+). It functions in the pathway metabolic intermediate biosynthesis; chorismate biosynthesis; chorismate from D-erythrose 4-phosphate and phosphoenolpyruvate: step 3/7. Its pathway is metabolic intermediate biosynthesis; chorismate biosynthesis; chorismate from D-erythrose 4-phosphate and phosphoenolpyruvate: step 4/7. In terms of biological role, bifunctional enzyme that catalyzes two sequential steps of the aromatic amino acids biosynthetic pathway. In the first reaction, the AroD domain catalyzes the cis-dehydration of 3-dehydroquinate (DHQ) and introduces the first double bond of the aromatic ring to yield 3-dehydroshikimate; in the second reaction, the AroE domain catalyzes the reversible NADPH linked reduction of 3-dehydroshikimate (DHSA) to yield shikimate (SA). The sequence is that of Shikimate biosynthesis protein AroDE from Chlamydia trachomatis serovar D (strain ATCC VR-885 / DSM 19411 / UW-3/Cx).